A 229-amino-acid chain; its full sequence is Putative N-acetylmannosamine-6-phosphate 2-epimerase (229 aa).

The protein belongs to the NanE family.

The catalysed reaction is an N-acyl-D-glucosamine 6-phosphate = an N-acyl-D-mannosamine 6-phosphate. Its pathway is amino-sugar metabolism; N-acetylneuraminate degradation; D-fructose 6-phosphate from N-acetylneuraminate: step 3/5. Functionally, converts N-acetylmannosamine-6-phosphate (ManNAc-6-P) to N-acetylglucosamine-6-phosphate (GlcNAc-6-P). The chain is Putative N-acetylmannosamine-6-phosphate 2-epimerase from Escherichia fergusonii (strain ATCC 35469 / DSM 13698 / CCUG 18766 / IAM 14443 / JCM 21226 / LMG 7866 / NBRC 102419 / NCTC 12128 / CDC 0568-73).